The primary structure comprises 269 residues: MTALPRYAVFGNPVAHSKSPQIHRQFALQEGVEIEYGRICADIGSFAQAVSTFFGTGGCGANVTVPFKQEAFDLADEHSERASAAGAVNTLILLENGKLRGDNTDGLGLVGDIVKVQNTEVEGKNILLLGAGGAVRGVIPVLLAQNPARIVIANRTRAKAEEVAARFGIEAVPMADLNGGFDIIINGTSGGLNGQIPDIPPDIFQNCALAYDMVYGEAAKPFLDFARQSGAKQTADGLGMLVGQAAASYALWRGFKPDIRPVIEYMKAL.

Shikimate-binding positions include 17-19 (SKS) and Thr64. Lys68 acts as the Proton acceptor in catalysis. Position 80 (Glu80) interacts with NADP(+). The shikimate site is built by Asn89 and Asp105. NADP(+) contacts are provided by residues 130 to 134 (GAGGA), 154 to 159 (NRTRAK), and Met213. Tyr215 provides a ligand contact to shikimate. Gly237 is an NADP(+) binding site.

It belongs to the shikimate dehydrogenase family. In terms of assembly, homodimer.

It carries out the reaction shikimate + NADP(+) = 3-dehydroshikimate + NADPH + H(+). The protein operates within metabolic intermediate biosynthesis; chorismate biosynthesis; chorismate from D-erythrose 4-phosphate and phosphoenolpyruvate: step 4/7. Functionally, involved in the biosynthesis of the chorismate, which leads to the biosynthesis of aromatic amino acids. Catalyzes the reversible NADPH linked reduction of 3-dehydroshikimate (DHSA) to yield shikimate (SA). The chain is Shikimate dehydrogenase (NADP(+)) from Neisseria lactamica.